A 366-amino-acid chain; its full sequence is Aminomethyltransferase (366 aa).

Belongs to the GcvT family. In terms of assembly, the glycine cleavage system is composed of four proteins: P, T, L and H.

The catalysed reaction is N(6)-[(R)-S(8)-aminomethyldihydrolipoyl]-L-lysyl-[protein] + (6S)-5,6,7,8-tetrahydrofolate = N(6)-[(R)-dihydrolipoyl]-L-lysyl-[protein] + (6R)-5,10-methylene-5,6,7,8-tetrahydrofolate + NH4(+). In terms of biological role, the glycine cleavage system catalyzes the degradation of glycine. The polypeptide is Aminomethyltransferase (Thermosynechococcus vestitus (strain NIES-2133 / IAM M-273 / BP-1)).